The primary structure comprises 224 residues: UPF0758 protein NE1464 (224 aa).

Residues isoleucine 102–isoleucine 224 form the MPN domain. Positions 173, 175, and 186 each coordinate Zn(2+). Positions histidine 173–aspartate 186 match the JAMM motif motif.

Belongs to the UPF0758 family.

The chain is UPF0758 protein NE1464 from Nitrosomonas europaea (strain ATCC 19718 / CIP 103999 / KCTC 2705 / NBRC 14298).